The sequence spans 555 residues: Vacuolar fusion protein MON1 homolog A (555 aa).

Residues 1-12 (MAADMQRKRSSE) are compositionally biased toward basic and acidic residues. The segment at 1-87 (MAADMQRKRS…RGPPPLPADM (87 aa)) is disordered. Residues Ser31 and Ser56 each carry the phosphoserine modification. At Thr61 the chain carries Phosphothreonine. Ser91 is subject to Phosphoserine. The interval 114–147 (PGSSEDWLDPPGAVGRPATEPPREGTAEGDEEDA) is disordered.

This sequence belongs to the MON1/SAND family. As to quaternary structure, interacts with CCZ1. Found in a complex with RMC1, CCZ1, MON1A and MON1B. The MON1A-CCZ1B complex interacts with RIMOC1. The MON1A-CCZ1B complex interacts with RAB7A and this interaction is enhanced in the presence of RIMOC1.

In terms of biological role, plays an important role in membrane trafficking through the secretory apparatus. Not involved in endocytic trafficking to lysosomes. Acts in concert with CCZ1, as a guanine exchange factor (GEF) for RAB7, promotes the exchange of GDP to GTP, converting it from an inactive GDP-bound form into an active GTP-bound form. The protein is Vacuolar fusion protein MON1 homolog A (MON1A) of Macaca fascicularis (Crab-eating macaque).